The following is a 526-amino-acid chain: MPYHEFEVSKCIPERREHAVMKAAGEDLTSCLPKGYLNTIPGTISERGCAYCGAKHVIGTPMKDVIHISHGPNGCTYDTWQTKRYISDNDNFQLKYTFATDVKEKHVVFGAEGLLKKSMHEAFDAFPNIKRMTVYQTCTTALIGDDVDAIAKEVMEERGDVDVFVCNSPGFAGPSQSGGHHKINIAWLNQKVGTVEPDYLGEHVINYVGEYNIQGDQEVMIDYFNRMGIQVLSTFTGNGSYDSLRMMHRAHLNVLECARSAEYICDELRARYGIPRLDIDGFGFEPLANSLRKVALFFGIEDKAEAIIAEEYAKWKPQLDWYKERLKGKKVCLWPGGSKLWHWAHAIEEEMGLKVVSVYTKFGHQGDMEKGVSRCGEGALAIDDPNELESVEAIEMLKPDIIFTGKRPGEFVKKHGVPYLNAHAYHNGPYKGFEGWVRFARDIYNAIYSPMRQLAALDISAPDAAITSGFRTAKMNADLTVSDEVKFSEVLHEYTGKYDSIAEIRARNQPMPPSRKLRDAVQPAAE.

3 residues coordinate [8Fe-7S] cluster: cysteine 49, cysteine 75, and cysteine 138. [8Fe-9S-C-homocitryl] cluster-binding residues include cysteine 257 and histidine 423. A disordered region spans residues 507–526; the sequence is RNQPMPPSRKLRDAVQPAAE.

Belongs to the NifD/NifK/NifE/NifN family. As to quaternary structure, hexamer of two alpha, two beta, and two delta chains. The cofactor is [8Fe-7S] cluster. [8Fe-9S-C-homocitryl] cluster is required as a cofactor.

The catalysed reaction is N2 + 8 reduced [2Fe-2S]-[ferredoxin] + 16 ATP + 16 H2O = H2 + 8 oxidized [2Fe-2S]-[ferredoxin] + 2 NH4(+) + 16 ADP + 16 phosphate + 6 H(+). Functionally, this iron-iron protein is part of the nitrogenase complex that catalyzes the key enzymatic reactions in nitrogen fixation. Other nitrogenase complexes utilize a molybdenum-iron protein or a vanadium-iron protein. This chain is Nitrogenase iron-iron protein alpha chain (anfD), found in Rhodobacter capsulatus (Rhodopseudomonas capsulata).